The chain runs to 420 residues: UDP-N-acetylglucosamine 1-carboxyvinyltransferase (420 aa).

Phosphoenolpyruvate is bound at residue 22 to 23 (KN). A UDP-N-acetyl-alpha-D-glucosamine-binding site is contributed by arginine 92. The Proton donor role is filled by cysteine 116. Residue cysteine 116 is modified to 2-(S-cysteinyl)pyruvic acid O-phosphothioketal. UDP-N-acetyl-alpha-D-glucosamine contacts are provided by residues 121–125 (RPVDQ), aspartate 304, and isoleucine 326.

Belongs to the EPSP synthase family. MurA subfamily.

The protein resides in the cytoplasm. It carries out the reaction phosphoenolpyruvate + UDP-N-acetyl-alpha-D-glucosamine = UDP-N-acetyl-3-O-(1-carboxyvinyl)-alpha-D-glucosamine + phosphate. It participates in cell wall biogenesis; peptidoglycan biosynthesis. In terms of biological role, cell wall formation. Adds enolpyruvyl to UDP-N-acetylglucosamine. This is UDP-N-acetylglucosamine 1-carboxyvinyltransferase from Paraburkholderia phymatum (strain DSM 17167 / CIP 108236 / LMG 21445 / STM815) (Burkholderia phymatum).